We begin with the raw amino-acid sequence, 774 residues long: Formin-like protein 13 (774 aa).

An N-terminal signal peptide occupies residues 1-22 (MRRRVALSTAIALLVGAQLCVA). Residues 51–67 (PPPPMSGSEAVPPPPPA) show a composition bias toward pro residues. Positions 51-78 (PPPPMSGSEAVPPPPPAAAASATTGGGR) are disordered. Low complexity predominate over residues 68-78 (AAASATTGGGR). Residues 89 to 109 (IALSAGLVALAVASYSCCLLL) form a helical membrane-spanning segment. Disordered regions lie at residues 130-163 (AAAA…DAIY), 176-338 (HEKS…HLKP), 374-402 (FLNS…RRLL), and 740-774 (GSGK…SSSS). Positions 194-216 (DLRPLPPLKRPESQPPPPPPSTP) are enriched in pro residues. Positions 242–261 (SSFSRSTSQHSTLEQTAMPP) are enriched in low complexity. Residues 262–286 (MAAPAPPQTNPPRPVRPPPPPPPPR) are compositionally biased toward pro residues. Residues 326–749 (GAARPPKPPH…GSGKSFRVPA (424 aa)) form the FH2 domain.

The protein belongs to the formin-like family. Class-I subfamily.

The protein resides in the membrane. This is Formin-like protein 13 (FH13) from Oryza sativa subsp. japonica (Rice).